The chain runs to 642 residues: Threonine--tRNA ligase (642 aa).

The TGS domain occupies 1–61 (MPVITLPDGS…ENDATLAIIT (61 aa)). The interval 243–534 (DHRKIGKQLD…LTEEFAGFFP (292 aa)) is catalytic. Zn(2+) contacts are provided by C334, H385, and H511.

This sequence belongs to the class-II aminoacyl-tRNA synthetase family. As to quaternary structure, homodimer. It depends on Zn(2+) as a cofactor.

Its subcellular location is the cytoplasm. The catalysed reaction is tRNA(Thr) + L-threonine + ATP = L-threonyl-tRNA(Thr) + AMP + diphosphate + H(+). Functionally, catalyzes the attachment of threonine to tRNA(Thr) in a two-step reaction: L-threonine is first activated by ATP to form Thr-AMP and then transferred to the acceptor end of tRNA(Thr). Also edits incorrectly charged L-seryl-tRNA(Thr). The sequence is that of Threonine--tRNA ligase from Salmonella choleraesuis (strain SC-B67).